Consider the following 189-residue polypeptide: NADH-quinone oxidoreductase subunit B (189 aa).

Cysteine 39, cysteine 40, cysteine 104, and cysteine 135 together coordinate [4Fe-4S] cluster.

This sequence belongs to the complex I 20 kDa subunit family. As to quaternary structure, NDH-1 is composed of 14 different subunits. Subunits NuoB, C, D, E, F, and G constitute the peripheral sector of the complex. [4Fe-4S] cluster is required as a cofactor.

It is found in the cell inner membrane. It catalyses the reaction a quinone + NADH + 5 H(+)(in) = a quinol + NAD(+) + 4 H(+)(out). Functionally, NDH-1 shuttles electrons from NADH, via FMN and iron-sulfur (Fe-S) centers, to quinones in the respiratory chain. The immediate electron acceptor for the enzyme in this species is believed to be a menaquinone. Couples the redox reaction to proton translocation (for every two electrons transferred, four hydrogen ions are translocated across the cytoplasmic membrane), and thus conserves the redox energy in a proton gradient. The polypeptide is NADH-quinone oxidoreductase subunit B (Chlorobium phaeovibrioides (strain DSM 265 / 1930) (Prosthecochloris vibrioformis (strain DSM 265))).